A 478-amino-acid polypeptide reads, in one-letter code: Protein trichome birefringence-like 20 (478 aa).

The helical; Signal-anchor for type II membrane protein transmembrane segment at 10–30 (IGLVIFPLILLTIAPILYLFF) threads the bilayer. Residues 50–68 (SSAISSPSRYNHSSSSSDS) show a composition bias toward low complexity. Residues 50–125 (SSAISSPSRY…KEHRRKKRKR (76 aa)) are disordered. Residues 92–110 (SSSLHNNDRLSISSSNGHH) are compositionally biased toward polar residues. The span at 112–125 (VTPKKEHRRKKRKR) shows a compositional bias: basic residues. A GDS motif motif is present at residues 200 to 202 (GDS). The short motif at 447–461 (DCVHWCLPGPIDSWN) is the DCXHWCLPGXXDXWN motif element.

This sequence belongs to the PC-esterase family. TBL subfamily.

It is found in the membrane. Functionally, may act as a bridging protein that binds pectin and other cell wall polysaccharides. Probably involved in maintaining esterification of pectins. May be involved in the specific O-acetylation of cell wall polymers. The protein is Protein trichome birefringence-like 20 (TBL20) of Arabidopsis thaliana (Mouse-ear cress).